A 111-amino-acid polypeptide reads, in one-letter code: Universal stress protein B (111 aa).

A run of 2 helical transmembrane segments spans residues 1-21 (MISTVALFWALCVVCVVNMAR) and 90-110 (FILTSALCGLVVVSLVALMLW).

This sequence belongs to the universal stress protein B family.

Its subcellular location is the cell inner membrane. In Yersinia pseudotuberculosis serotype O:1b (strain IP 31758), this protein is Universal stress protein B.